Reading from the N-terminus, the 1136-residue chain is Mitochondrial 3' processome subunit 3 (1136 aa).

The transit peptide at 1-97 (MKKAWAQLER…RGLVCTTVGD (97 aa)) directs the protein to the mitochondrion.

As to quaternary structure, component of the mitochondrial 3' processome (MPsome) complex composed at least of terminal uridylyltransferase KRET1/TUT1, 3'-5' exonuclease DSS1, MPSS1, MPSS2 and MPSS3. Within the complex, interacts with KRET1.

It localises to the mitochondrion. Functionally, as part of the mitochondrial 3' processome (MPsome), involved in the maturation of guided RNA (gRNA) precursors. This chain is Mitochondrial 3' processome subunit 3, found in Trypanosoma brucei brucei.